A 258-amino-acid chain; its full sequence is Acyl-[acyl-carrier-protein]--UDP-N-acetylglucosamine O-acyltransferase (258 aa).

The protein belongs to the transferase hexapeptide repeat family. LpxA subfamily. In terms of assembly, homotrimer.

It is found in the cytoplasm. It catalyses the reaction a (3R)-hydroxyacyl-[ACP] + UDP-N-acetyl-alpha-D-glucosamine = a UDP-3-O-[(3R)-3-hydroxyacyl]-N-acetyl-alpha-D-glucosamine + holo-[ACP]. Its pathway is glycolipid biosynthesis; lipid IV(A) biosynthesis; lipid IV(A) from (3R)-3-hydroxytetradecanoyl-[acyl-carrier-protein] and UDP-N-acetyl-alpha-D-glucosamine: step 1/6. Functionally, involved in the biosynthesis of lipid A, a phosphorylated glycolipid that anchors the lipopolysaccharide to the outer membrane of the cell. In Pseudomonas putida (strain ATCC 47054 / DSM 6125 / CFBP 8728 / NCIMB 11950 / KT2440), this protein is Acyl-[acyl-carrier-protein]--UDP-N-acetylglucosamine O-acyltransferase.